The chain runs to 131 residues: Small ribosomal subunit protein uS8 (131 aa).

The protein belongs to the universal ribosomal protein uS8 family. In terms of assembly, part of the 30S ribosomal subunit. Contacts proteins S5 and S12.

Functionally, one of the primary rRNA binding proteins, it binds directly to 16S rRNA central domain where it helps coordinate assembly of the platform of the 30S subunit. The sequence is that of Small ribosomal subunit protein uS8 from Paraburkholderia xenovorans (strain LB400).